A 184-amino-acid polypeptide reads, in one-letter code: PLASMODESMATA CALLOSE-BINDING PROTEIN 3 (184 aa).

An N-terminal signal peptide occupies residues 1–19 (MAVFVLVMILLAMAGHSSG). A disulfide bond links Cys22 and Cys84. A disordered region spans residues 109–146 (SGSGTTTPVTTTPSTRVPTTTNTRPYTITPSTGGGLGI). The span at 113-139 (TTTPVTTTPSTRVPTTTNTRPYTITPS) shows a compositional bias: low complexity. Residue Ser158 is the site of GPI-anchor amidated serine attachment. The propeptide at 159–184 (FGFKLQSPRFGFIVLFTLFLPFYLFS) is removed in mature form.

Post-translationally, contains two additional disulfide bonds. In terms of tissue distribution, expressed in the shoot apical region and in young leaves but also detected in the laminar and vasculature of mature leaves.

It is found in the cell membrane. The protein resides in the cell junction. It localises to the plasmodesma. The sequence is that of PLASMODESMATA CALLOSE-BINDING PROTEIN 3 (PDCB3) from Arabidopsis thaliana (Mouse-ear cress).